Consider the following 426-residue polypeptide: Serine--tRNA ligase (426 aa).

Basic and acidic residues predominate over residues methionine 1 to arginine 15. Residues methionine 1–glycine 22 are disordered. An L-serine-binding site is contributed by threonine 228 to glutamate 230. ATP contacts are provided by residues arginine 259–glutamate 261 and valine 275. Position 282 (glutamate 282) interacts with L-serine. ATP is bound at residue glutamate 346–serine 349. Position 386 (threonine 386) interacts with L-serine.

It belongs to the class-II aminoacyl-tRNA synthetase family. Type-1 seryl-tRNA synthetase subfamily. As to quaternary structure, homodimer. The tRNA molecule binds across the dimer.

The protein resides in the cytoplasm. It carries out the reaction tRNA(Ser) + L-serine + ATP = L-seryl-tRNA(Ser) + AMP + diphosphate + H(+). The enzyme catalyses tRNA(Sec) + L-serine + ATP = L-seryl-tRNA(Sec) + AMP + diphosphate + H(+). It functions in the pathway aminoacyl-tRNA biosynthesis; selenocysteinyl-tRNA(Sec) biosynthesis; L-seryl-tRNA(Sec) from L-serine and tRNA(Sec): step 1/1. Functionally, catalyzes the attachment of serine to tRNA(Ser). Is also able to aminoacylate tRNA(Sec) with serine, to form the misacylated tRNA L-seryl-tRNA(Sec), which will be further converted into selenocysteinyl-tRNA(Sec). This is Serine--tRNA ligase from Pseudarthrobacter chlorophenolicus (strain ATCC 700700 / DSM 12829 / CIP 107037 / JCM 12360 / KCTC 9906 / NCIMB 13794 / A6) (Arthrobacter chlorophenolicus).